Consider the following 92-residue polypeptide: Small ribosomal subunit protein bS20 (92 aa).

Residues 1-23 (MANSPSAKKRAIQAEKRRSHNAS) form a disordered region.

It belongs to the bacterial ribosomal protein bS20 family.

Binds directly to 16S ribosomal RNA. The chain is Small ribosomal subunit protein bS20 from Stutzerimonas stutzeri (strain A1501) (Pseudomonas stutzeri).